A 209-amino-acid polypeptide reads, in one-letter code: Guanylate kinase (209 aa).

The region spanning 10–189 (GLLLVLSAPS…AFSDLRSVVV (180 aa)) is the Guanylate kinase-like domain. Residue 17 to 24 (APSGAGKT) participates in ATP binding.

The protein belongs to the guanylate kinase family.

It is found in the cytoplasm. It catalyses the reaction GMP + ATP = GDP + ADP. Functionally, essential for recycling GMP and indirectly, cGMP. The protein is Guanylate kinase of Myxococcus xanthus (strain DK1622).